We begin with the raw amino-acid sequence, 823 residues long: Leucine--tRNA ligase (823 aa).

The 'HIGH' region signature appears at 42–52 (PYPSGTLHMGH). The 'KMSKS' region signature appears at 575 to 579 (KMSKS). Lys-578 is an ATP binding site.

This sequence belongs to the class-I aminoacyl-tRNA synthetase family.

The protein localises to the cytoplasm. The catalysed reaction is tRNA(Leu) + L-leucine + ATP = L-leucyl-tRNA(Leu) + AMP + diphosphate. The chain is Leucine--tRNA ligase from Legionella pneumophila (strain Lens).